A 187-amino-acid chain; its full sequence is Probable carboxylesterase Culp7 (187 aa).

A disulfide bridge connects residues Cys-15 and Cys-69. The Nucleophile role is filled by Ser-80. Cysteines 151 and 158 form a disulfide. Asp-155 is a catalytic residue. His-167 acts as the Proton donor/acceptor in catalysis.

Belongs to the cutinase family.

It is found in the cytoplasm. It localises to the cell membrane. Its subcellular location is the secreted. The protein resides in the cell wall. Functionally, may have a role in cell wall processes. Does not exhibit cutinase activity. This chain is Probable carboxylesterase Culp7, found in Mycobacterium tuberculosis (strain ATCC 25618 / H37Rv).